Here is a 285-residue protein sequence, read N- to C-terminus: 2-dehydro-3-deoxyphosphooctonate aldolase (285 aa).

This sequence belongs to the KdsA family.

The protein resides in the cytoplasm. It carries out the reaction D-arabinose 5-phosphate + phosphoenolpyruvate + H2O = 3-deoxy-alpha-D-manno-2-octulosonate-8-phosphate + phosphate. It functions in the pathway carbohydrate biosynthesis; 3-deoxy-D-manno-octulosonate biosynthesis; 3-deoxy-D-manno-octulosonate from D-ribulose 5-phosphate: step 2/3. It participates in bacterial outer membrane biogenesis; lipopolysaccharide biosynthesis. The chain is 2-dehydro-3-deoxyphosphooctonate aldolase from Acidovorax sp. (strain JS42).